Here is a 78-residue protein sequence, read N- to C-terminus: Large ribosomal subunit protein bL28 (78 aa).

Residues 1-26 form a disordered region; it reads MARVCQVTGKRPMSGHNVSHANNKTK.

This sequence belongs to the bacterial ribosomal protein bL28 family.

The protein is Large ribosomal subunit protein bL28 of Nitrosomonas europaea (strain ATCC 19718 / CIP 103999 / KCTC 2705 / NBRC 14298).